The chain runs to 385 residues: Spermidine/putrescine import ATP-binding protein PotA (385 aa).

The 233-residue stretch at 6–238 (IEFKNVSKVF…PINHFVATFI (233 aa)) folds into the ABC transporter domain. 40 to 47 (GASGSGKS) is an ATP binding site.

Belongs to the ABC transporter superfamily. Spermidine/putrescine importer (TC 3.A.1.11.1) family. The complex is composed of two ATP-binding proteins (PotA), two transmembrane proteins (PotB and PotC) and a solute-binding protein (PotD).

The protein resides in the cell membrane. The catalysed reaction is ATP + H2O + polyamine-[polyamine-binding protein]Side 1 = ADP + phosphate + polyamineSide 2 + [polyamine-binding protein]Side 1.. Its function is as follows. Part of the ABC transporter complex PotABCD involved in spermidine/putrescine import. Responsible for energy coupling to the transport system. This Streptococcus pneumoniae serotype 4 (strain ATCC BAA-334 / TIGR4) protein is Spermidine/putrescine import ATP-binding protein PotA.